A 2344-amino-acid polypeptide reads, in one-letter code: Pecanex-like protein 1 (2344 aa).

2 consecutive transmembrane segments (helical) span residues 33–53 (ALHL…YMAL) and 57–77 (MIIV…LKMV). Disordered stretches follow at residues 101-163 (QRAK…GSSR), 271-290 (SHSY…SSSA), 306-692 (QQQR…TRAR), and 749-837 (VTRS…VQSR). Residues 143–163 (SSRNSYAGLDPSNQIGSGSSR) show a composition bias toward polar residues. A compositionally biased stretch (basic residues) spans 272 to 282 (HSYRKEHRPRG). Positions 328 to 343 (RESSAGKSCPPAQSQP) are enriched in polar residues. Low complexity predominate over residues 372–390 (SLRSLSTRSSGSTESYCSG). The span at 396–406 (NSTLSSYKSEQ) shows a compositional bias: polar residues. Composition is skewed to basic and acidic residues over residues 416-458 (LSEH…DKTA), 508-522 (RPPE…EQSE), and 531-547 (RVCK…DVRP). Residues 557 to 572 (TSAHKPGRRRTGKKRA) show a composition bias toward basic residues. Positions 616–638 (SIHSAHQFSSDSSSSATSHSCQS) are enriched in low complexity. A compositionally biased stretch (polar residues) spans 749–758 (VTRSRNSLPS). Low complexity-rich tracts occupy residues 770 to 781 (AATGAAQASEEA) and 817 to 835 (LSLQ…VKVQ). 3 helical membrane passes run 1010–1030 (ILAV…LIQG), 1035–1055 (IWVF…LKSV), and 1069–1089 (IIAY…WLLD). N1094 carries N-linked (GlcNAc...) asparagine glycosylation. The chain crosses the membrane as a helical span at residues 1119–1139 (LVIVFTLCFPIVFFIGLLPQV). N-linked (GlcNAc...) asparagine glycosylation occurs at N1158. 4 helical membrane-spanning segments follow: residues 1163 to 1183 (LLAA…LYGL), 1196 to 1216 (HVPV…YHLS), 1269 to 1289 (LVVC…TVFT), and 1297 to 1317 (YVLY…LPQV). Residues N1582, N1723, N1985, and N2075 are each glycosylated (N-linked (GlcNAc...) asparagine). Positions 2051 to 2123 (EDSDTGGGTS…SSLVRQSPAR (73 aa)) are disordered. Composition is skewed to polar residues over residues 2061–2081 (CPGN…QGST) and 2095–2118 (PTTS…SLVR). N-linked (GlcNAc...) asparagine glycans are attached at residues N2231, N2237, and N2263.

It belongs to the pecanex family.

It is found in the membrane. In Mus musculus (Mouse), this protein is Pecanex-like protein 1.